Reading from the N-terminus, the 364-residue chain is Anthranilate phosphoribosyltransferase (364 aa).

The segment covering 1 to 10 (MTSGPSQPFP) has biased composition (polar residues). The disordered stretch occupies residues 1 to 22 (MTSGPSQPFPSASGPDDGPSWP). 5-phospho-alpha-D-ribose 1-diphosphate-binding positions include Gly-101, 104–105 (GD), Thr-109, 111–114 (NLST), 129–137 (KHGNRAASS), and Gly-141. Gly-101 provides a ligand contact to anthranilate. Ser-113 serves as a coordination point for Mg(2+). Asn-132 contacts anthranilate. Arg-187 contributes to the anthranilate binding site. Residues Asp-245 and Glu-246 each coordinate Mg(2+).

The protein belongs to the anthranilate phosphoribosyltransferase family. As to quaternary structure, homodimer. Mg(2+) serves as cofactor.

It carries out the reaction N-(5-phospho-beta-D-ribosyl)anthranilate + diphosphate = 5-phospho-alpha-D-ribose 1-diphosphate + anthranilate. It functions in the pathway amino-acid biosynthesis; L-tryptophan biosynthesis; L-tryptophan from chorismate: step 2/5. In terms of biological role, catalyzes the transfer of the phosphoribosyl group of 5-phosphorylribose-1-pyrophosphate (PRPP) to anthranilate to yield N-(5'-phosphoribosyl)-anthranilate (PRA). The chain is Anthranilate phosphoribosyltransferase from Mycolicibacterium smegmatis (strain ATCC 700084 / mc(2)155) (Mycobacterium smegmatis).